We begin with the raw amino-acid sequence, 455 residues long: Membrane-bound lytic murein transglycosylase F (455 aa).

The N-terminal stretch at 1–21 is a signal peptide; the sequence is MPKSAVSLFAILLLAASVITA. The interval 22-264 is non-LT domain; that stretch reads CSPQTRPDAM…HIKEQHFGHV (243 aa). Residues 265-455 form an LT domain region; it reads KQFNYVTTSL…LKYLDEQGRL (191 aa). Residue Glu-309 is part of the active site.

The protein in the N-terminal section; belongs to the bacterial solute-binding protein 3 family. This sequence in the C-terminal section; belongs to the transglycosylase Slt family.

The protein localises to the cell outer membrane. The enzyme catalyses Exolytic cleavage of the (1-&gt;4)-beta-glycosidic linkage between N-acetylmuramic acid (MurNAc) and N-acetylglucosamine (GlcNAc) residues in peptidoglycan, from either the reducing or the non-reducing ends of the peptidoglycan chains, with concomitant formation of a 1,6-anhydrobond in the MurNAc residue.. Functionally, murein-degrading enzyme that degrades murein glycan strands and insoluble, high-molecular weight murein sacculi, with the concomitant formation of a 1,6-anhydromuramoyl product. Lytic transglycosylases (LTs) play an integral role in the metabolism of the peptidoglycan (PG) sacculus. Their lytic action creates space within the PG sacculus to allow for its expansion as well as for the insertion of various structures such as secretion systems and flagella. The protein is Membrane-bound lytic murein transglycosylase F of Idiomarina loihiensis (strain ATCC BAA-735 / DSM 15497 / L2-TR).